The primary structure comprises 412 residues: UPF0761 membrane protein lpg0643 (412 aa).

Helical transmembrane passes span 36-56 (ALAFTSLLAVVPLMSVGLAIF), 99-119 (LSIWGIVFLIFTALLVMFTIE), 137-157 (AFLLYWAIISLAPVLLGLSLA), 177-197 (ILHYSPFFLSLIGFTFLYVVV), 210-230 (GGLVAAILFESAKHAFAYYLI), and 241-261 (AFATVPIFFIWVYWVWIITLL).

The protein belongs to the UPF0761 family.

The protein localises to the cell inner membrane. The polypeptide is UPF0761 membrane protein lpg0643 (Legionella pneumophila subsp. pneumophila (strain Philadelphia 1 / ATCC 33152 / DSM 7513)).